The sequence spans 388 residues: Alanine racemase (388 aa).

The Proton acceptor; specific for D-alanine role is filled by lysine 40. Residue lysine 40 is modified to N6-(pyridoxal phosphate)lysine. Arginine 137 is a substrate binding site. Tyrosine 269 serves as the catalytic Proton acceptor; specific for L-alanine. Methionine 318 lines the substrate pocket.

It belongs to the alanine racemase family. Requires pyridoxal 5'-phosphate as cofactor.

The enzyme catalyses L-alanine = D-alanine. It participates in amino-acid biosynthesis; D-alanine biosynthesis; D-alanine from L-alanine: step 1/1. Its function is as follows. Catalyzes the interconversion of L-alanine and D-alanine. May also act on other amino acids. This chain is Alanine racemase (alr), found in Halalkalibacterium halodurans (strain ATCC BAA-125 / DSM 18197 / FERM 7344 / JCM 9153 / C-125) (Bacillus halodurans).